An 88-amino-acid chain; its full sequence is Small ribosomal subunit protein uS15 (88 aa).

It belongs to the universal ribosomal protein uS15 family. In terms of assembly, part of the 30S ribosomal subunit. Forms a bridge to the 50S subunit in the 70S ribosome, contacting the 23S rRNA.

Functionally, one of the primary rRNA binding proteins, it binds directly to 16S rRNA where it helps nucleate assembly of the platform of the 30S subunit by binding and bridging several RNA helices of the 16S rRNA. In terms of biological role, forms an intersubunit bridge (bridge B4) with the 23S rRNA of the 50S subunit in the ribosome. This is Small ribosomal subunit protein uS15 from Halothermothrix orenii (strain H 168 / OCM 544 / DSM 9562).